The following is a 105-amino-acid chain: U1-sicaritoxin-Li1b (105 aa).

The N-terminal stretch at 1–19 is a signal peptide; sequence MKLLFEGLLVLVLIAFVVA. Residues 20 to 36 constitute a propeptide that is removed on maturation; it reads EFESDAEKWEALITQER. 4 cysteine pairs are disulfide-bonded: Cys-38/Cys-55, Cys-46/Cys-60, Cys-54/Cys-73, and Cys-62/Cys-71. Arg-82 carries the arginine amide modification. The propeptide occupies 86 to 105; it reads ALMVDPETHRMLSLHRLSEE.

Belongs to the neurotoxin 28 (Litx) family. In terms of tissue distribution, expressed by the venom gland.

Its subcellular location is the secreted. In terms of biological role, toxin active against insects (S.frugiperda larvae). May act on sodium (Nav) or calcium (Cav) channels. In Loxosceles intermedia (Brown spider), this protein is U1-sicaritoxin-Li1b.